The sequence spans 65 residues: Potassium channel toxin kappa-KTx 2.6 (65 aa).

A signal peptide spans 1-27; sequence MKTSKMICAFLLVLVVGTFNDISGAYG. A propeptide spanning residues 28–39 is cleaved from the precursor; the sequence is EYVEDQHSFKIE. Intrachain disulfides connect Cys-45–Cys-63 and Cys-49–Cys-59.

This sequence belongs to the short scorpion toxin superfamily. Potassium channel inhibitor kappa-KTx family. Kappa-KTx 2 subfamily. In terms of tissue distribution, expressed by the venom gland.

It is found in the secreted. Potassium channel inhibitor (Kv). The protein is Potassium channel toxin kappa-KTx 2.6 of Opisthacanthus cayaporum (South American scorpion).